Here is a 516-residue protein sequence, read N- to C-terminus: Sodium channel protein Nach (516 aa).

Topologically, residues 1–49 are cytoplasmic; it reads MGHEEELSPEQVDLKVSPLMGSLKRTWNDFCATSSIHGLRYTRDEDTNR. The chain crosses the membrane as a helical span at residues 50-70; it reads IVHFVWLLISLVMFICAVVMA. The Extracellular portion of the chain corresponds to 71–452; sequence RTFYIDFRSN…LVSNLGSAFS (382 aa). Residues asparagine 128, asparagine 165, asparagine 220, and asparagine 348 are each glycosylated (N-linked (GlcNAc...) asparagine). The chain crosses the membrane as a helical span at residues 453–473; that stretch reads LFVGMSMLSVVEIMYYFSVIL. Residues 474-516 are Cytoplasmic-facing; sequence RKNYVLECEARKKMLHKGPKFAWPKANDSHSKHQKSVFIIHKM.

Belongs to the amiloride-sensitive sodium channel (TC 1.A.6) family.

Its subcellular location is the membrane. Its function is as follows. Part of a complex that plays a role in tracheal liquid clearance. Probable role in sodium transport. This is Sodium channel protein Nach (Nach) from Drosophila ananassae (Fruit fly).